Reading from the N-terminus, the 105-residue chain is Thioredoxin (105 aa).

The Thioredoxin domain maps to 2 to 103 (VKQIESKSAF…KEKLEATIKG (102 aa)). Lysine 3 carries the N6-acetyllysine modification. Lysine 8 is modified (N6-succinyllysine). Active-site nucleophile residues include cysteine 32 and cysteine 35. An intrachain disulfide couples cysteine 32 to cysteine 35. Residue lysine 39 is modified to N6-acetyllysine. Cysteine 62 and cysteine 69 each carry S-nitrosocysteine. Cysteine 73 carries the S-nitrosocysteine; alternate modification. Lysine 94 bears the N6-acetyllysine; alternate mark. Lysine 94 is subject to N6-succinyllysine; alternate.

Belongs to the thioredoxin family. As to quaternary structure, homodimer; disulfide-linked. Interacts with TXNIP through the redox-active site. Interacts with MAP3K5 and CASP3. Interacts with APEX1; the interaction stimulates the FOS/JUN AP-1 DNA-binding activity in a redox-dependent manner. Post-translationally, in the fully reduced protein, both Cys-69 and Cys-73 are nitrosylated in response to nitric oxide (NO). When two disulfide bonds are present in the protein, only Cys-73 is nitrosylated. Cys-73 can serve as donor for nitrosylation of target proteins.

The protein resides in the nucleus. Its subcellular location is the cytoplasm. The protein localises to the secreted. Functionally, participates in various redox reactions through the reversible oxidation of its active center dithiol to a disulfide and catalyzes dithiol-disulfide exchange reactions. Plays a role in the reversible S-nitrosylation of cysteine residues in target proteins, and thereby contributes to the response to intracellular nitric oxide. Nitrosylates the active site Cys of CASP3 in response to nitric oxide (NO), and thereby inhibits caspase-3 activity. Induces the FOS/JUN AP-1 DNA binding activity in ionizing radiation (IR) cells through its oxidation/reduction status and stimulates AP-1 transcriptional activity. The protein is Thioredoxin (TXN) of Equus caballus (Horse).